We begin with the raw amino-acid sequence, 451 residues long: Threonylcarbamoyladenosine tRNA methylthiotransferase MtaB (451 aa).

Residues 2-114 (ATVAFHTLGC…MLGYIDQYRE (113 aa)) form the MTTase N-terminal domain. [4Fe-4S] cluster contacts are provided by cysteine 11, cysteine 47, cysteine 78, cysteine 153, cysteine 157, and cysteine 160. The 231-residue stretch at 139–369 (FTDRTRASLK…IALSDQLAKE (231 aa)) folds into the Radical SAM core domain. The region spanning 372–437 (SQYENEVLEI…YPYNEGQFVR (66 aa)) is the TRAM domain.

Belongs to the methylthiotransferase family. MtaB subfamily. It depends on [4Fe-4S] cluster as a cofactor.

It is found in the cytoplasm. The enzyme catalyses N(6)-L-threonylcarbamoyladenosine(37) in tRNA + (sulfur carrier)-SH + AH2 + 2 S-adenosyl-L-methionine = 2-methylsulfanyl-N(6)-L-threonylcarbamoyladenosine(37) in tRNA + (sulfur carrier)-H + 5'-deoxyadenosine + L-methionine + A + S-adenosyl-L-homocysteine + 2 H(+). Catalyzes the methylthiolation of N6-threonylcarbamoyladenosine (t(6)A), leading to the formation of 2-methylthio-N6-threonylcarbamoyladenosine (ms(2)t(6)A) at position 37 in tRNAs that read codons beginning with adenine. The sequence is that of Threonylcarbamoyladenosine tRNA methylthiotransferase MtaB (mtaB) from Bacillus subtilis (strain 168).